We begin with the raw amino-acid sequence, 252 residues long: NAD(P)H-quinone oxidoreductase subunit K (252 aa).

The [4Fe-4S] cluster site is built by cysteine 73, cysteine 74, cysteine 138, and cysteine 169. Residues 225–236 (ASTQKQALSPSQ) show a composition bias toward polar residues. Residues 225–252 (ASTQKQALSPSQEIPLEDQNEATKEIAQ) form a disordered region.

This sequence belongs to the complex I 20 kDa subunit family. As to quaternary structure, NDH-1 can be composed of about 15 different subunits; different subcomplexes with different compositions have been identified which probably have different functions. It depends on [4Fe-4S] cluster as a cofactor.

The protein resides in the cellular thylakoid membrane. It carries out the reaction a plastoquinone + NADH + (n+1) H(+)(in) = a plastoquinol + NAD(+) + n H(+)(out). The enzyme catalyses a plastoquinone + NADPH + (n+1) H(+)(in) = a plastoquinol + NADP(+) + n H(+)(out). In terms of biological role, NDH-1 shuttles electrons from an unknown electron donor, via FMN and iron-sulfur (Fe-S) centers, to quinones in the respiratory and/or the photosynthetic chain. The immediate electron acceptor for the enzyme in this species is believed to be plastoquinone. Couples the redox reaction to proton translocation, and thus conserves the redox energy in a proton gradient. Cyanobacterial NDH-1 also plays a role in inorganic carbon-concentration. The protein is NAD(P)H-quinone oxidoreductase subunit K of Prochlorococcus marinus (strain MIT 9211).